The following is a 439-amino-acid chain: 23S rRNA (uracil(1939)-C(5))-methyltransferase RlmD (439 aa).

The TRAM domain occupies 1–54; sequence MTAPVLIESLDQEGRGVAHAEGKVIFIEGALPGEVVTYNAYRRKPSFELAQVGQ. [4Fe-4S] cluster is bound by residues Cys-67, Cys-73, Cys-76, and Cys-155. 6 residues coordinate S-adenosyl-L-methionine: Gln-264, Phe-293, Asn-298, Glu-314, Asn-342, and Asp-363. Residue Cys-391 is the Nucleophile of the active site.

This sequence belongs to the class I-like SAM-binding methyltransferase superfamily. RNA M5U methyltransferase family. RlmD subfamily.

It carries out the reaction uridine(1939) in 23S rRNA + S-adenosyl-L-methionine = 5-methyluridine(1939) in 23S rRNA + S-adenosyl-L-homocysteine + H(+). Catalyzes the formation of 5-methyl-uridine at position 1939 (m5U1939) in 23S rRNA. The chain is 23S rRNA (uracil(1939)-C(5))-methyltransferase RlmD from Nitrosospira multiformis (strain ATCC 25196 / NCIMB 11849 / C 71).